Here is a 504-residue protein sequence, read N- to C-terminus: D-alanine--D-alanyl carrier protein ligase (504 aa).

152–153 contributes to the ATP binding site; it reads TS. Position 197 (aspartate 197) interacts with D-alanine. 292–297 provides a ligand contact to ATP; the sequence is NTYGPT. Valine 301 is a D-alanine binding site. Residues aspartate 383, 394–397, and lysine 492 each bind ATP; that span reads YNGR. D-alanine is bound at residue lysine 492.

This sequence belongs to the ATP-dependent AMP-binding enzyme family. DltA subfamily.

It is found in the cytoplasm. The catalysed reaction is holo-[D-alanyl-carrier protein] + D-alanine + ATP = D-alanyl-[D-alanyl-carrier protein] + AMP + diphosphate. It functions in the pathway cell wall biogenesis; lipoteichoic acid biosynthesis. In terms of biological role, catalyzes the first step in the D-alanylation of lipoteichoic acid (LTA), the activation of D-alanine and its transfer onto the D-alanyl carrier protein (Dcp) DltC. In an ATP-dependent two-step reaction, forms a high energy D-alanyl-AMP intermediate, followed by transfer of the D-alanyl residue as a thiol ester to the phosphopantheinyl prosthetic group of the Dcp. D-alanylation of LTA plays an important role in modulating the properties of the cell wall in Gram-positive bacteria, influencing the net charge of the cell wall. This is D-alanine--D-alanyl carrier protein ligase from Bacillus cereus (strain B4264).